Reading from the N-terminus, the 1480-residue chain is ABC transporter G family member 49 (1480 aa).

A compositionally biased stretch (polar residues) spans 1–18 (MHTTTQATPQKSMVMTTT). Disordered stretches follow at residues 1–42 (MHTT…AGSS), 60–81 (VSGE…EDDE), and 104–124 (SSTR…GGAA). Composition is skewed to gly residues over residues 63-73 (ELGGGGGGGGG) and 107-123 (RGGG…GGGA). In terms of domain architecture, ABC transporter 1 spans 212–485 (LAAKLGFSHH…FESCGFKCPE (274 aa)). 245–252 (GPPGCGKT) contacts ATP. One can recognise an ABC transmembrane type-2 1 domain in the interval 563–775 (HLLKACFDRE…AEIGLTGNEF (213 aa)). A run of 6 helical transmembrane segments spans residues 581–601 (FLHI…GTVF), 619–639 (SLFY…VMSI), 656–676 (GWAY…VAAL), 699–719 (LLVL…VGSY), 725–745 (VGPI…GFLI), and 811–831 (VAAL…GLTI). The 253-residue stretch at 877–1129 (ISFQDVNYYV…KVIQYFQSIP (253 aa)) folds into the ABC transporter 2 domain. An ATP-binding site is contributed by 922 to 929 (GVTGAGKT). One can recognise an ABC transmembrane type-2 2 domain in the interval 1202-1418 (EQFKACLWKQ…TLNLLFTTQF (217 aa)). The next 7 membrane-spanning stretches (helical) occupy residues 1226–1246 (IVFM…QGNI), 1254–1274 (GLFT…INNS), 1311–1331 (IPYV…TIGY), 1340–1360 (WFFY…MLIV), 1368–1388 (VASI…GFVM), 1396–1416 (WWIW…LFTT), and 1449–1469 (LLPL…ILYG).

It belongs to the ABC transporter superfamily. ABCG family. PDR (TC 3.A.1.205) subfamily.

The protein resides in the membrane. In terms of biological role, may be a general defense protein. The polypeptide is ABC transporter G family member 49 (Oryza sativa subsp. japonica (Rice)).